The chain runs to 396 residues: Elongation factor Tu 1 (396 aa).

One can recognise a tr-type G domain in the interval 10–206; the sequence is KPHINVGTIG…VLDSYIPEPQ (197 aa). Positions 19 to 26 are G1; sequence GHVDHGKT. 19-26 is a GTP binding site; sequence GHVDHGKT. A Mg(2+)-binding site is contributed by Thr-26. The tract at residues 60 to 64 is G2; it reads GITIN. The tract at residues 81–84 is G3; that stretch reads DCPG. GTP-binding positions include 81–85 and 136–139; these read DCPGH and NKAD. Positions 136–139 are G4; sequence NKAD. Positions 174 to 176 are G5; the sequence is SAL.

It belongs to the TRAFAC class translation factor GTPase superfamily. Classic translation factor GTPase family. EF-Tu/EF-1A subfamily. Monomer.

The protein resides in the cytoplasm. It catalyses the reaction GTP + H2O = GDP + phosphate + H(+). GTP hydrolase that promotes the GTP-dependent binding of aminoacyl-tRNA to the A-site of ribosomes during protein biosynthesis. The protein is Elongation factor Tu 1 of Nitrosomonas eutropha (strain DSM 101675 / C91 / Nm57).